The primary structure comprises 687 residues: Adhesion G-protein coupled receptor G1 (687 aa).

The first 25 residues, 1–25 (MTAQSLLQMTLFLLSLLFLVQGAHG), serve as a signal peptide directing secretion. 26 to 33 (RGHREDFR) contributes to the heparin binding site. Residues 26–402 (RGHREDFRFC…VEVDAVHKHY (377 aa)) are Extracellular-facing. 2 disulfide bridges follow: C35–C91 and C121–C177. Residues N39, N148, and N171 are each glycosylated (N-linked (GlcNAc...) asparagine). A heparin-binding site is contributed by 190-200 (LKHPQKASRRP). Residues 224–395 (DTVSFEEDRI…AVLMVSSVEV (172 aa)) enclose the GAIN-B domain. 4 N-linked (GlcNAc...) asparagine glycosylation sites follow: N234, N303, N324, and N341. 2 disulfide bridges follow: C346–C377 and C366–C379. Positions 346–395 (CVFWVEDPTLSSPGHWSSAGCETVRRETQTSCFCNHLTYFAVLMVSSVEV) are GPS. The segment at 384-397 (YFAVLMVSSVEVDA) is stachel. The chain crosses the membrane as a helical span at residues 403–423 (LSLLSYVGCVISALACVVTIA). At 424-442 (AYLCSRRKPRDYTIKVHMN) the chain is on the cytoplasmic side. A helical transmembrane segment spans residues 443-463 (LLLAVFLLDMSFLLSEPVALT). At 464–470 (GSEAGCR) the chain is on the extracellular side. The chain crosses the membrane as a helical span at residues 471–491 (AGAIFLHFSLLACLSWMGLEG). At 492-512 (YNLYRLVVEVFGTYVPGYLLK) the chain is on the cytoplasmic side. A helical transmembrane segment spans residues 513–533 (LSAMGWGFPIFLVTLVALVDV). The Extracellular portion of the chain corresponds to 534 to 570 (DNYGPIILAVHRTPESVIYPSMCWIRDSLVSYVTNLG). The helical transmembrane segment at 571–591 (LFSLVFLFNMAMLGTMVVQIL) threads the bilayer. Residues 592–603 (RLRPHTQKWSHV) lie on the Cytoplasmic side of the membrane. A helical transmembrane segment spans residues 604–624 (LTLLGLSLVLGLPWALIFFSF). Topologically, residues 625–630 (ASGTFQ) are extracellular. Residues 631 to 651 (LVVLYLFSIITSFQGFLIFIW) form a helical membrane-spanning segment. Residues 652–687 (YWSMRLQARGGPSPLKSNSDSARLPISSGSTSSSRI) are Cytoplasmic-facing. Residues 664–687 (SPLKSNSDSARLPISSGSTSSSRI) are disordered. Positions 678–687 (SSGSTSSSRI) are enriched in low complexity.

Belongs to the G-protein coupled receptor 2 family. LN-TM7 subfamily. Heterodimer of 2 chains generated by proteolytic processing; the large extracellular N-terminal fragment (ADGRG1 NT) and the membrane-bound C-terminal fragment (ADGRG1-CT) predominantly remain associated and non-covalently linked. ADGRG1 NT self-associates in a trans-trans manner; the homophilic interaction enhances receptor signaling. Interacts with TGM2. Interacts with heparin; leading to the reduction of ADGRG1 shedding. Interacts with COL3A1. Part of a GPCR-tetraspanin complex at least consisting of ADGRG1, CD81, eventually CD9, and GNA11 in which CD81 is enhancing the association of ADGRG1 with GNA11. Post-translationally, autoproteolytically cleaved into 2 fragments; the large extracellular N-terminal fragment (ADGRG1 NT) and the membrane-bound C-terminal fragment (ADGRG1 CT) predominantly remain associated and non-covalently linked. Shedding to yield the secreted ADGRG1 N-terminal fragment seems to involve metalloprotease(s). Ubiquitinated. Undergoes polyubiquitination upon activation.

Its subcellular location is the cell membrane. The protein resides in the secreted. It is found in the membrane raft. Forms a heterodimer of 2 chains generated by proteolytic processing that remain associated through non-covalent interactions mediated by the GAIN-B domain. In the inactivated receptor, the Stachel sequence (also named stalk) is embedded in the GAIN-B domain, where it adopts a beta-strand conformation. On activation, the Stachel moves into the 7 transmembrane region and adopts a twisted hook-shaped configuration that forms contacts within the receptor, leading to coupling of a G-alpha protein, which activates signaling. The cleaved GAIN-B and N-terminal domains can then dissociate from the rest of the receptor. Adhesion G-protein coupled receptor (aGPCR) for steroid hormone 17alpha-hydroxypregnenolone (17-OH), which is involved in cell adhesion and cell-cell interactions. Ligand binding causes a conformation change that triggers signaling via guanine nucleotide-binding proteins (G proteins) and modulates the activity of downstream effectors, such as RhoA pathway. ADGRG1 is coupled to G(12) and/or G(13) G proteins (GNA12 and GNA13, respectively) and mediates the activation Rho small GTPases. Acts as a potent suppressor of ferroptosis: binding to 17-OH-binding initiates signaling that down-regulates CD36 and alleviates ferroptosis-induced liver injury. Ligand-binding also induces cell adhesion activity via association with proteins such as collagen III/COL3A1 and TGM2. Mediates cell matrix adhesion in developing neurons and hematopoietic stem cells. Involved in cortical development, specifically in maintenance of the pial basement membrane integrity and in cortical lamination: association with COL3A1 in the developing brain inhibits neuronal migration via activation of the RhoA pathway. Together with TGM2, acts as a regulator of myelination and myelin repair in oligodendrocyte precursor cells. Acts as a hemostatic sensor of shear force: G protein-coupled receptor signaling is activated in response to shear force in platelets, promoting G(13) G protein signaling, and platelet shape change and aggregation in a COL3A1-dependent manner. Acts as an inhibitor of VEGFA production thereby inhibiting angiogenesis through a signaling pathway mediated by PRKCA. Plays a role in the maintenance of hematopoietic stem cells in bone marrow niche. Plays an essential role in testis development. The polypeptide is Adhesion G-protein coupled receptor G1 (ADGRG1) (Pongo pygmaeus (Bornean orangutan)).